A 209-amino-acid polypeptide reads, in one-letter code: Uracil phosphoribosyltransferase (209 aa).

5-phospho-alpha-D-ribose 1-diphosphate-binding positions include Arg79, Arg104, and 131–139 (DPMLATGGS). Residues Ile194 and 199 to 201 (GDA) each bind uracil. Residue Asp200 coordinates 5-phospho-alpha-D-ribose 1-diphosphate.

It belongs to the UPRTase family. The cofactor is Mg(2+).

It catalyses the reaction UMP + diphosphate = 5-phospho-alpha-D-ribose 1-diphosphate + uracil. Its pathway is pyrimidine metabolism; UMP biosynthesis via salvage pathway; UMP from uracil: step 1/1. With respect to regulation, allosterically activated by GTP. Catalyzes the conversion of uracil and 5-phospho-alpha-D-ribose 1-diphosphate (PRPP) to UMP and diphosphate. In Brevibacillus brevis (strain 47 / JCM 6285 / NBRC 100599), this protein is Uracil phosphoribosyltransferase.